A 360-amino-acid polypeptide reads, in one-letter code: Holliday junction branch migration complex subunit RuvB (360 aa).

The interval 4-196 (HEEDLDQAEE…FGFTAHLEFY (193 aa)) is large ATPase domain (RuvB-L). Residues Leu-35, Arg-36, Gly-77, Lys-80, Thr-81, Thr-82, 143-145 (EDF), Arg-186, Tyr-196, and Arg-233 each bind ATP. Thr-81 is a binding site for Mg(2+). A small ATPAse domain (RuvB-S) region spans residues 197 to 267 (EPDELDLIVQ…VAQDALDLYE (71 aa)). Positions 270 to 360 (QLGLDRLDRG…PESDPPLFED (91 aa)) are head domain (RuvB-H). Residues Arg-306, Arg-325, and Arg-330 each coordinate DNA.

Belongs to the RuvB family. In terms of assembly, homohexamer. Forms an RuvA(8)-RuvB(12)-Holliday junction (HJ) complex. HJ DNA is sandwiched between 2 RuvA tetramers; dsDNA enters through RuvA and exits via RuvB. An RuvB hexamer assembles on each DNA strand where it exits the tetramer. Each RuvB hexamer is contacted by two RuvA subunits (via domain III) on 2 adjacent RuvB subunits; this complex drives branch migration. In the full resolvosome a probable DNA-RuvA(4)-RuvB(12)-RuvC(2) complex forms which resolves the HJ.

It localises to the cytoplasm. It catalyses the reaction ATP + H2O = ADP + phosphate + H(+). The RuvA-RuvB-RuvC complex processes Holliday junction (HJ) DNA during genetic recombination and DNA repair, while the RuvA-RuvB complex plays an important role in the rescue of blocked DNA replication forks via replication fork reversal (RFR). RuvA specifically binds to HJ cruciform DNA, conferring on it an open structure. The RuvB hexamer acts as an ATP-dependent pump, pulling dsDNA into and through the RuvAB complex. RuvB forms 2 homohexamers on either side of HJ DNA bound by 1 or 2 RuvA tetramers; 4 subunits per hexamer contact DNA at a time. Coordinated motions by a converter formed by DNA-disengaged RuvB subunits stimulates ATP hydrolysis and nucleotide exchange. Immobilization of the converter enables RuvB to convert the ATP-contained energy into a lever motion, pulling 2 nucleotides of DNA out of the RuvA tetramer per ATP hydrolyzed, thus driving DNA branch migration. The RuvB motors rotate together with the DNA substrate, which together with the progressing nucleotide cycle form the mechanistic basis for DNA recombination by continuous HJ branch migration. Branch migration allows RuvC to scan DNA until it finds its consensus sequence, where it cleaves and resolves cruciform DNA. This chain is Holliday junction branch migration complex subunit RuvB, found in Nocardioides sp. (strain ATCC BAA-499 / JS614).